The sequence spans 321 residues: uncharacterized protein (321 aa).

N-acetylvaline is present on Val2. Positions 37–63 (SEASRLLTPQTSSNHALSKMQKDDDIR) are disordered. A compositionally biased stretch (polar residues) spans 43 to 52 (LTPQTSSNHA). Thr44 carries the phosphothreonine modification. 7 positions are modified to phosphoserine: Ser49, Ser69, Ser121, Ser126, Ser129, Ser137, and Ser139. 2 disordered regions span residues 115–270 (KKQR…YSIS) and 283–321 (ETLE…AQPQ). 3 stretches are compositionally biased toward polar residues: residues 120–145 (KSIN…TSTD), 153–162 (KYSSSGTPEN), and 178–189 (SYGQMIKNNSNR). Thr159 is modified (phosphothreonine). The span at 204–229 (EIDHTAPEKSEKRQERSGRSFDRQKS) shows a compositional bias: basic and acidic residues. Polar residues predominate over residues 237-253 (LSRSISRGPTKNKTVSP). A phosphoserine mark is found at Ser238, Ser240, Ser242, and Ser270. Acidic residues predominate over residues 284–305 (TLEEEQEDAEKEGVLMEDEGNE). Residues 306–315 (EYTKDLEEAA) show a composition bias toward basic and acidic residues.

It is found in the cytoplasm. This is an uncharacterized protein from Saccharomyces cerevisiae (strain ATCC 204508 / S288c) (Baker's yeast).